Here is a 73-residue protein sequence, read N- to C-terminus: N-terminal-borealin-like protein (73 aa).

Belongs to the borealin family. As to quaternary structure, component of the aurora kinase complex composed of at least BIR1, BNL1, IPL1 and SLI15.

It is found in the nucleus. The protein localises to the cytoplasm. The protein resides in the cytoskeleton. It localises to the spindle. Its function is as follows. Component of the aurora kinase complex, also called chromosomal passenger complex (CPC), essential for chromosome segregation and metaphase chromosome alignment. Mediates the SLI15-BIR1 interaction within the CPC. This chain is N-terminal-borealin-like protein (NBL1), found in Saccharomyces cerevisiae (strain ATCC 204508 / S288c) (Baker's yeast).